A 230-amino-acid chain; its full sequence is Ribonuclease 3 (230 aa).

An RNase III domain is found at 5–134; the sequence is NDTISKVINY…LIGAIYIDGG (130 aa). Glu-47 serves as a coordination point for Mg(2+). Residue Asp-51 is part of the active site. Residues Asn-120 and Glu-123 each contribute to the Mg(2+) site. Glu-123 is an active-site residue. The DRBM domain maps to 159-228; it reads DPKTSLQEWT…AELILEKIKK (70 aa).

It belongs to the ribonuclease III family. Homodimer. It depends on Mg(2+) as a cofactor.

The protein resides in the cytoplasm. The catalysed reaction is Endonucleolytic cleavage to 5'-phosphomonoester.. Functionally, digests double-stranded RNA. Involved in the processing of primary rRNA transcript to yield the immediate precursors to the large and small rRNAs (23S and 16S). Processes some mRNAs, and tRNAs when they are encoded in the rRNA operon. Processes pre-crRNA and tracrRNA of type II CRISPR loci if present in the organism. This Wolbachia pipientis subsp. Culex pipiens (strain wPip) protein is Ribonuclease 3.